A 151-amino-acid polypeptide reads, in one-letter code: Large ribosomal subunit protein uL15 (151 aa).

The segment at 1-45 (MNLSSLKPVKGSTKTCKRVGRGQGSGCGGTSTRGHKGQKSRSGYS) is disordered. Residues 21 to 31 (RGQGSGCGGTS) are compositionally biased toward gly residues.

It belongs to the universal ribosomal protein uL15 family. As to quaternary structure, part of the 50S ribosomal subunit.

Functionally, binds to the 23S rRNA. In Azobacteroides pseudotrichonymphae genomovar. CFP2, this protein is Large ribosomal subunit protein uL15.